The primary structure comprises 130 residues: MAQTQYYGTGRRKSAIARVYTRTGTGQIRINDKSLEEYFGRKTDRMIVMQALEAVEMTDKLDVNVKVIGGGPSGQAGAIRHGLARALIELDEAMRPVLRKAGYVTRDAREVERKKVGLHKARRRPQYSKR.

The protein belongs to the universal ribosomal protein uS9 family.

The chain is Small ribosomal subunit protein uS9 from Methylococcus capsulatus (strain ATCC 33009 / NCIMB 11132 / Bath).